The chain runs to 478 residues: Proline--tRNA ligase (478 aa).

This sequence belongs to the class-II aminoacyl-tRNA synthetase family. ProS type 3 subfamily. Homodimer.

It is found in the cytoplasm. The enzyme catalyses tRNA(Pro) + L-proline + ATP = L-prolyl-tRNA(Pro) + AMP + diphosphate. Functionally, catalyzes the attachment of proline to tRNA(Pro) in a two-step reaction: proline is first activated by ATP to form Pro-AMP and then transferred to the acceptor end of tRNA(Pro). This is Proline--tRNA ligase from Methanococcoides burtonii (strain DSM 6242 / NBRC 107633 / OCM 468 / ACE-M).